The primary structure comprises 471 residues: MSQNTGKITQVIGAVVDVEFEPGKLPEIYHALRVTNPAINDSENNLVLEVAQHLGENSVRTIAMDSTDGLKRGQAVLDTGKQICAPVGKKTLGRIINVIGEPVDEMGPIGNDKENPIHREAPPFEDQSTKVEAFTTGIKVVDLLAPYARGGKIGLFGGAGVGKTVLIMELINNIARQHGGFSVFAGVGERTREGNDLWMEMKETGVLEKTALVYGQMNEPPGARARVALTALSIAEHFRDDEGLDVLLFIDNIFRFTQAGSEVSALLGRIPSAVGYQPTLATEMGELQERITSTKNGSITSVQAIYVPADDLTDPAPATAFAHLDATTVLSRQIAELGIYPAVDPLDSTSRILDPQIIGEEHYAIARQVQYILQKYKDLQDIIAILGMDELSEEDKLIVARARKIQRFLSQPFFVAEVFTGSPGKYVELKDTIKGFQEIVSGKHDHLPEQAFYMVGSIEEAVEKAAKLAAV.

Residue 157-164 (GGAGVGKT) coordinates ATP.

This sequence belongs to the ATPase alpha/beta chains family. In terms of assembly, F-type ATPases have 2 components, CF(1) - the catalytic core - and CF(0) - the membrane proton channel. CF(1) has five subunits: alpha(3), beta(3), gamma(1), delta(1), epsilon(1). CF(0) has three main subunits: a(1), b(2) and c(9-12). The alpha and beta chains form an alternating ring which encloses part of the gamma chain. CF(1) is attached to CF(0) by a central stalk formed by the gamma and epsilon chains, while a peripheral stalk is formed by the delta and b chains.

The protein localises to the cell inner membrane. The catalysed reaction is ATP + H2O + 4 H(+)(in) = ADP + phosphate + 5 H(+)(out). Functionally, produces ATP from ADP in the presence of a proton gradient across the membrane. The catalytic sites are hosted primarily by the beta subunits. This is ATP synthase subunit beta 2 from Pelobacter propionicus (strain DSM 2379 / NBRC 103807 / OttBd1).